The primary structure comprises 178 residues: Large ribosomal subunit protein uL6 (178 aa).

The protein belongs to the universal ribosomal protein uL6 family. As to quaternary structure, part of the 50S ribosomal subunit.

Functionally, this protein binds to the 23S rRNA, and is important in its secondary structure. It is located near the subunit interface in the base of the L7/L12 stalk, and near the tRNA binding site of the peptidyltransferase center. The polypeptide is Large ribosomal subunit protein uL6 (Streptococcus suis (strain 05ZYH33)).